A 466-amino-acid polypeptide reads, in one-letter code: UDP-N-acetylmuramoylalanine--D-glutamate ligase (466 aa).

121–127 (GTNGKST) serves as a coordination point for ATP.

This sequence belongs to the MurCDEF family.

Its subcellular location is the cytoplasm. The catalysed reaction is UDP-N-acetyl-alpha-D-muramoyl-L-alanine + D-glutamate + ATP = UDP-N-acetyl-alpha-D-muramoyl-L-alanyl-D-glutamate + ADP + phosphate + H(+). It functions in the pathway cell wall biogenesis; peptidoglycan biosynthesis. Functionally, cell wall formation. Catalyzes the addition of glutamate to the nucleotide precursor UDP-N-acetylmuramoyl-L-alanine (UMA). This Rhodopseudomonas palustris (strain HaA2) protein is UDP-N-acetylmuramoylalanine--D-glutamate ligase.